Consider the following 204-residue polypeptide: MIGKLKGTIDEIGEDYVLVDVQGVCYVAYCSARTLSKLGSAGEACVLFIETYVREDQLKLFGFMTALEREWFNLLQSVQGVGAKVALAVLSTLTPGELANAIALQDRAAVSRAPGVGPKVAMRLVTELKNRAPAYAGEAINIALKRELGEGVAAAPVADAVSALTNLGYSRDQAANAVAAAMKTAGEGADSAKLIRLGLKELAR.

Residues 1-64 (MIGKLKGTID…EDQLKLFGFM (64 aa)) form a domain I region. Residues 65 to 143 (TALEREWFNL…AYAGEAINIA (79 aa)) are domain II. Residues 144–151 (LKRELGEG) form a flexible linker region. Residues 152 to 204 (VAAAPVADAVSALTNLGYSRDQAANAVAAAMKTAGEGADSAKLIRLGLKELAR) are domain III.

The protein belongs to the RuvA family. In terms of assembly, homotetramer. Forms an RuvA(8)-RuvB(12)-Holliday junction (HJ) complex. HJ DNA is sandwiched between 2 RuvA tetramers; dsDNA enters through RuvA and exits via RuvB. An RuvB hexamer assembles on each DNA strand where it exits the tetramer. Each RuvB hexamer is contacted by two RuvA subunits (via domain III) on 2 adjacent RuvB subunits; this complex drives branch migration. In the full resolvosome a probable DNA-RuvA(4)-RuvB(12)-RuvC(2) complex forms which resolves the HJ.

It localises to the cytoplasm. In terms of biological role, the RuvA-RuvB-RuvC complex processes Holliday junction (HJ) DNA during genetic recombination and DNA repair, while the RuvA-RuvB complex plays an important role in the rescue of blocked DNA replication forks via replication fork reversal (RFR). RuvA specifically binds to HJ cruciform DNA, conferring on it an open structure. The RuvB hexamer acts as an ATP-dependent pump, pulling dsDNA into and through the RuvAB complex. HJ branch migration allows RuvC to scan DNA until it finds its consensus sequence, where it cleaves and resolves the cruciform DNA. The chain is Holliday junction branch migration complex subunit RuvA from Rhizobium etli (strain ATCC 51251 / DSM 11541 / JCM 21823 / NBRC 15573 / CFN 42).